Here is a 663-residue protein sequence, read N- to C-terminus: MDFIFHYQSSWLIPMLPFLSAFVAGFGLISFRLPTRSLRHLYGLISTITVFFSMIISMNLLWKYIIGHSNYCFLFPWIVNDNISLKLGFFIDPLSSLMLFLVTSVAVLVMSYSHGYMSHDQSYVRFFAYLSLFTASMLGLVLSPNLFQIYIFWELVGMCSYLLIGFWFTRPNAASACQKAFITNRIGDFCLLLGILGLYWFTNSFDFITVTKRTEEIISNNNSHLYFFIFCSFLLFCGPIAKSAQFPLHIWLPDAMEGPTPISALIHAATMVAAGIFLVARLFPLFQLFPSIMNLITCIGILTAFLGSTIALSQIDLKKSLAYSTISQLGYMMVAMGIGSYKAGLFHLVTHAYSKALLFLGSGSVIHNLEPLLGYNPENNQNLVFMGGLGKSMPITRFTFLIGTLSLCGVPPFACFWSKDEIIADAWKYNFNLGLIAWITAGLTGFYMFRVYLLAFEGDFRGIIFLNKNNLKSTKEVHESNLYMLIPLIILSFLSLFIGFISTPFHDYLYIFLDSPIVYDNETSYFQILLNFSSIGVALIGMIIAYSIYAYNNISIDFGFFKRSLKKIYFEFYQFSFSKWYIEVFYHSLFLSGTRNLAQLLFYLDQWLFDGVVNLTGISTLLGGQSLKYKESGRVSSYLFSILIGALVLFFFLPLHNSQIGSN.

The next 16 helical transmembrane spans lie at 11-31 (WLIP…LISF), 41-61 (LYGL…MNLL), 89-109 (FFID…AVLV), 126-146 (FFAY…SPNL), 149-169 (IYIF…FWFT), 189-209 (FCLL…DFIT), 224-244 (HLYF…AKSA), 260-280 (TPIS…FLVA), 292-312 (IMNL…TIAL), 329-349 (LGYM…FHLV), 398-418 (FTFL…CFWS), 436-456 (IAWI…LLAF), 482-502 (LYML…GFIS), 528-548 (ILLN…AYSI), 607-627 (WLFD…GQSL), and 635-655 (VSSY…FLPL).

It belongs to the complex I subunit 5 family. As to quaternary structure, NDH is composed of at least 16 different subunits, 5 of which are encoded in the nucleus.

It localises to the plastid. It is found in the chloroplast thylakoid membrane. The catalysed reaction is a plastoquinone + NADH + (n+1) H(+)(in) = a plastoquinol + NAD(+) + n H(+)(out). It catalyses the reaction a plastoquinone + NADPH + (n+1) H(+)(in) = a plastoquinol + NADP(+) + n H(+)(out). In terms of biological role, NDH shuttles electrons from NAD(P)H:plastoquinone, via FMN and iron-sulfur (Fe-S) centers, to quinones in the photosynthetic chain and possibly in a chloroplast respiratory chain. The immediate electron acceptor for the enzyme in this species is believed to be plastoquinone. Couples the redox reaction to proton translocation, and thus conserves the redox energy in a proton gradient. The chain is NAD(P)H-quinone oxidoreductase subunit 5, chloroplastic (ndhF) from Chara vulgaris (Common stonewort).